Reading from the N-terminus, the 556-residue chain is 2-isopropylmalate synthase (556 aa).

A Pyruvate carboxyltransferase domain is found at 33-307; the sequence is PIWCSSDLRD…HPQLDFSDID (275 aa). Residues Asp42, His246, His248, and Asn282 each coordinate Mg(2+). Positions 439 to 556 are regulatory domain; the sequence is ATSPYALASH…AVTQAEAKAA (118 aa).

Belongs to the alpha-IPM synthase/homocitrate synthase family. LeuA type 2 subfamily. As to quaternary structure, homodimer. It depends on Mg(2+) as a cofactor.

It localises to the cytoplasm. It carries out the reaction 3-methyl-2-oxobutanoate + acetyl-CoA + H2O = (2S)-2-isopropylmalate + CoA + H(+). It participates in amino-acid biosynthesis; L-leucine biosynthesis; L-leucine from 3-methyl-2-oxobutanoate: step 1/4. Catalyzes the condensation of the acetyl group of acetyl-CoA with 3-methyl-2-oxobutanoate (2-ketoisovalerate) to form 3-carboxy-3-hydroxy-4-methylpentanoate (2-isopropylmalate). The protein is 2-isopropylmalate synthase of Pseudomonas paraeruginosa (strain DSM 24068 / PA7) (Pseudomonas aeruginosa (strain PA7)).